The primary structure comprises 466 residues: Ribulose bisphosphate carboxylase large chain (466 aa).

Lys-5 bears the N6,N6,N6-trimethyllysine mark. Positions 114 and 164 each coordinate substrate. Catalysis depends on Lys-166, which acts as the Proton acceptor. Position 168 (Lys-168) interacts with substrate. The Mg(2+) site is built by Lys-192, Asp-194, and Glu-195. Position 192 is an N6-carboxylysine (Lys-192). The active-site Proton acceptor is His-285. Substrate is bound by residues Arg-286, His-318, and Ser-370.

The protein belongs to the RuBisCO large chain family. Type I subfamily. As to quaternary structure, heterohexadecamer of 8 large chains and 8 small chains; disulfide-linked. The disulfide link is formed within the large subunit homodimers. The cofactor is Mg(2+). In terms of processing, the disulfide bond which can form in the large chain dimeric partners within the hexadecamer appears to be associated with oxidative stress and protein turnover.

Its subcellular location is the plastid. The protein resides in the chloroplast. The catalysed reaction is 2 (2R)-3-phosphoglycerate + 2 H(+) = D-ribulose 1,5-bisphosphate + CO2 + H2O. It catalyses the reaction D-ribulose 1,5-bisphosphate + O2 = 2-phosphoglycolate + (2R)-3-phosphoglycerate + 2 H(+). Its function is as follows. RuBisCO catalyzes two reactions: the carboxylation of D-ribulose 1,5-bisphosphate, the primary event in carbon dioxide fixation, as well as the oxidative fragmentation of the pentose substrate in the photorespiration process. Both reactions occur simultaneously and in competition at the same active site. This is Ribulose bisphosphate carboxylase large chain from Caltha palustris (Yellow marsh marigold).